The primary structure comprises 146 residues: D-aminoacyl-tRNA deacylase (146 aa).

The short motif at 137–138 (GP) is the Gly-cisPro motif, important for rejection of L-amino acids element.

It belongs to the DTD family. As to quaternary structure, homodimer.

It is found in the cytoplasm. It catalyses the reaction glycyl-tRNA(Ala) + H2O = tRNA(Ala) + glycine + H(+). It carries out the reaction a D-aminoacyl-tRNA + H2O = a tRNA + a D-alpha-amino acid + H(+). An aminoacyl-tRNA editing enzyme that deacylates mischarged D-aminoacyl-tRNAs. Also deacylates mischarged glycyl-tRNA(Ala), protecting cells against glycine mischarging by AlaRS. Acts via tRNA-based rather than protein-based catalysis; rejects L-amino acids rather than detecting D-amino acids in the active site. By recycling D-aminoacyl-tRNA to D-amino acids and free tRNA molecules, this enzyme counteracts the toxicity associated with the formation of D-aminoacyl-tRNA entities in vivo and helps enforce protein L-homochirality. In Deinococcus deserti (strain DSM 17065 / CIP 109153 / LMG 22923 / VCD115), this protein is D-aminoacyl-tRNA deacylase.